Consider the following 229-residue polypeptide: 5'-methylthioadenosine/S-adenosylhomocysteine nucleosidase (229 aa).

The active-site Proton acceptor is Glu12. Residues Gly78, Ile152, and 173 to 174 contribute to the substrate site; that span reads ME. Asp197 serves as the catalytic Proton donor.

The protein belongs to the PNP/UDP phosphorylase family. MtnN subfamily.

It carries out the reaction S-adenosyl-L-homocysteine + H2O = S-(5-deoxy-D-ribos-5-yl)-L-homocysteine + adenine. It catalyses the reaction S-methyl-5'-thioadenosine + H2O = 5-(methylsulfanyl)-D-ribose + adenine. The catalysed reaction is 5'-deoxyadenosine + H2O = 5-deoxy-D-ribose + adenine. It functions in the pathway amino-acid biosynthesis; L-methionine biosynthesis via salvage pathway; S-methyl-5-thio-alpha-D-ribose 1-phosphate from S-methyl-5'-thioadenosine (hydrolase route): step 1/2. Catalyzes the irreversible cleavage of the glycosidic bond in both 5'-methylthioadenosine (MTA) and S-adenosylhomocysteine (SAH/AdoHcy) to adenine and the corresponding thioribose, 5'-methylthioribose and S-ribosylhomocysteine, respectively. Also cleaves 5'-deoxyadenosine, a toxic by-product of radical S-adenosylmethionine (SAM) enzymes, into 5-deoxyribose and adenine. The polypeptide is 5'-methylthioadenosine/S-adenosylhomocysteine nucleosidase (Haemophilus influenzae (strain PittGG)).